The primary structure comprises 146 residues: Large ribosomal subunit protein uL13 (146 aa).

This sequence belongs to the universal ribosomal protein uL13 family. As to quaternary structure, part of the 50S ribosomal subunit.

Functionally, this protein is one of the early assembly proteins of the 50S ribosomal subunit, although it is not seen to bind rRNA by itself. It is important during the early stages of 50S assembly. The polypeptide is Large ribosomal subunit protein uL13 (Malacoplasma penetrans (strain HF-2) (Mycoplasma penetrans)).